The chain runs to 250 residues: uncharacterized protein (250 aa).

Ser15, Leu17, Asp36, Asp56, Val57, and Cys82 together coordinate NAD(+). Ser143 provides a ligand contact to substrate. The NAD(+) site is built by Tyr156, Lys160, Phe189, and Thr191. Tyr156 acts as the Proton acceptor in catalysis.

It belongs to the short-chain dehydrogenases/reductases (SDR) family.

This is an uncharacterized protein from Mycobacterium tuberculosis (strain CDC 1551 / Oshkosh).